A 316-amino-acid polypeptide reads, in one-letter code: Methionyl-tRNA formyltransferase (316 aa).

112-115 lines the (6S)-5,6,7,8-tetrahydrofolate pocket; the sequence is GLLP.

It belongs to the Fmt family.

It catalyses the reaction L-methionyl-tRNA(fMet) + (6R)-10-formyltetrahydrofolate = N-formyl-L-methionyl-tRNA(fMet) + (6S)-5,6,7,8-tetrahydrofolate + H(+). Attaches a formyl group to the free amino group of methionyl-tRNA(fMet). The formyl group appears to play a dual role in the initiator identity of N-formylmethionyl-tRNA by promoting its recognition by IF2 and preventing the misappropriation of this tRNA by the elongation apparatus. The protein is Methionyl-tRNA formyltransferase of Chlamydia muridarum (strain MoPn / Nigg).